Reading from the N-terminus, the 319-residue chain is Lipoyl synthase (319 aa).

The disordered stretch occupies residues 6–29 (DTVSANPVRPRHPEKAARPDALSP). Residues 16–29 (RHPEKAARPDALSP) show a composition bias toward basic and acidic residues. [4Fe-4S] cluster contacts are provided by Cys-61, Cys-66, Cys-72, Cys-87, Cys-91, Cys-94, and Ser-300. Residues 73-289 (WDKKHATFMI…QTTAYAKGFL (217 aa)) form the Radical SAM core domain.

The protein belongs to the radical SAM superfamily. Lipoyl synthase family. [4Fe-4S] cluster serves as cofactor.

It is found in the cytoplasm. It carries out the reaction [[Fe-S] cluster scaffold protein carrying a second [4Fe-4S](2+) cluster] + N(6)-octanoyl-L-lysyl-[protein] + 2 oxidized [2Fe-2S]-[ferredoxin] + 2 S-adenosyl-L-methionine + 4 H(+) = [[Fe-S] cluster scaffold protein] + N(6)-[(R)-dihydrolipoyl]-L-lysyl-[protein] + 4 Fe(3+) + 2 hydrogen sulfide + 2 5'-deoxyadenosine + 2 L-methionine + 2 reduced [2Fe-2S]-[ferredoxin]. The protein operates within protein modification; protein lipoylation via endogenous pathway; protein N(6)-(lipoyl)lysine from octanoyl-[acyl-carrier-protein]: step 2/2. Catalyzes the radical-mediated insertion of two sulfur atoms into the C-6 and C-8 positions of the octanoyl moiety bound to the lipoyl domains of lipoate-dependent enzymes, thereby converting the octanoylated domains into lipoylated derivatives. This Rhodopseudomonas palustris (strain ATCC BAA-98 / CGA009) protein is Lipoyl synthase.